The primary structure comprises 476 residues: RNA-binding protein 45 (476 aa).

The disordered stretch occupies residues 1–20 (MDEAGSSASGGGFRPGVDSL). 2 consecutive RRM domains span residues 26-106 (SRIF…IAQS) and 121-195 (TRIF…PKNK). Residue lysine 34 forms a Glycyl lysine isopeptide (Lys-Gly) (interchain with G-Cter in SUMO2) linkage. A phosphoserine mark is found at serine 199 and serine 464. The 73-residue stretch at 392–464 (ERLFIVFNPH…VRLKVMLADS (73 aa)) folds into the RRM 3 domain.

The protein localises to the cytoplasm. The protein resides in the nucleus. Functionally, RNA-binding protein with binding specificity for poly(C). May play an important role in neural development. The chain is RNA-binding protein 45 (RBM45) from Homo sapiens (Human).